Consider the following 254-residue polypeptide: Imidazole glycerol phosphate synthase subunit HisF (254 aa).

Residues Asp13 and Asp132 contribute to the active site.

This sequence belongs to the HisA/HisF family. Heterodimer of HisH and HisF.

The protein localises to the cytoplasm. It carries out the reaction 5-[(5-phospho-1-deoxy-D-ribulos-1-ylimino)methylamino]-1-(5-phospho-beta-D-ribosyl)imidazole-4-carboxamide + L-glutamine = D-erythro-1-(imidazol-4-yl)glycerol 3-phosphate + 5-amino-1-(5-phospho-beta-D-ribosyl)imidazole-4-carboxamide + L-glutamate + H(+). Its pathway is amino-acid biosynthesis; L-histidine biosynthesis; L-histidine from 5-phospho-alpha-D-ribose 1-diphosphate: step 5/9. In terms of biological role, IGPS catalyzes the conversion of PRFAR and glutamine to IGP, AICAR and glutamate. The HisF subunit catalyzes the cyclization activity that produces IGP and AICAR from PRFAR using the ammonia provided by the HisH subunit. The protein is Imidazole glycerol phosphate synthase subunit HisF of Nautilia profundicola (strain ATCC BAA-1463 / DSM 18972 / AmH).